Consider the following 133-residue polypeptide: Ribosome-binding factor A (133 aa).

It belongs to the RbfA family. As to quaternary structure, monomer. Binds 30S ribosomal subunits, but not 50S ribosomal subunits or 70S ribosomes.

The protein localises to the cytoplasm. In terms of biological role, one of several proteins that assist in the late maturation steps of the functional core of the 30S ribosomal subunit. Associates with free 30S ribosomal subunits (but not with 30S subunits that are part of 70S ribosomes or polysomes). Required for efficient processing of 16S rRNA. May interact with the 5'-terminal helix region of 16S rRNA. The protein is Ribosome-binding factor A of Enterobacter sp. (strain 638).